Consider the following 947-residue polypeptide: Transcriptional regulator WAR1 (947 aa).

The span at 1 to 10 (MSDTTPEKGS) shows a compositional bias: basic and acidic residues. The interval 1 to 52 (MSDTTPEKGSVDSVSPSASNGSNTNNPLNNSSPQPLKSNESDKKPKVTRRSV) is disordered. A compositionally biased stretch (low complexity) spans 19-38 (SNGSNTNNPLNNSSPQPLKS). Positions 54–86 (CKSCHSLKVKCTPSDPNNPSAPCVRCINANRIC) form a DNA-binding region, zn(2)-C6 fungal-type. The interval 96–222 (RRKKSEILEA…SPTSKDDEIN (127 aa)) is disordered. Low complexity predominate over residues 129 to 142 (NSSENYSSSINNAN). Composition is skewed to polar residues over residues 143–158 (DSSLTSRYQSPMTFDP) and 167–185 (QASSAVPPISSNLNPQSAA).

Homodimer.

It is found in the nucleus. In terms of biological role, transcription factor required for yeast cell adherence to silicone substrate. Plays a role in resistance to weak organic acids such as acetate and sorbate. Binds in vitro to a nitric oxide-responsive element (NORE) but seems not to be involved in response to nitrosative stress. The sequence is that of Transcriptional regulator WAR1 (WAR1) from Candida albicans (strain SC5314 / ATCC MYA-2876) (Yeast).